We begin with the raw amino-acid sequence, 24 residues long: Brevinin-1BYa (24 aa).

A disulfide bridge connects residues Cys-18 and Cys-24.

Expressed by the skin glands.

It is found in the secreted. In terms of biological role, antibacterial activity against Gram-positive bacterium S.aureus and Gram-negative bacterium E.coli. High antifungal activity against C.albicans and a strong hemolytic activity. In Rana boylii (Foothill yellow-legged frog), this protein is Brevinin-1BYa.